The following is a 185-amino-acid chain: Ribosome-recycling factor (185 aa).

It belongs to the RRF family.

It localises to the cytoplasm. Functionally, responsible for the release of ribosomes from messenger RNA at the termination of protein biosynthesis. May increase the efficiency of translation by recycling ribosomes from one round of translation to another. The protein is Ribosome-recycling factor of Pseudomonas fluorescens (strain ATCC BAA-477 / NRRL B-23932 / Pf-5).